Consider the following 181-residue polypeptide: ATP synthase subunit delta (181 aa).

This sequence belongs to the ATPase delta chain family. As to quaternary structure, F-type ATPases have 2 components, F(1) - the catalytic core - and F(0) - the membrane proton channel. F(1) has five subunits: alpha(3), beta(3), gamma(1), delta(1), epsilon(1). F(0) has three main subunits: a(1), b(2) and c(10-14). The alpha and beta chains form an alternating ring which encloses part of the gamma chain. F(1) is attached to F(0) by a central stalk formed by the gamma and epsilon chains, while a peripheral stalk is formed by the delta and b chains. The F(1)F(0) complex interacts with SpoIIIJ and YqjG; YqgA is found in the same complex. Interacts with FloT.

It is found in the cell membrane. Its subcellular location is the membrane raft. Functionally, f(1)F(0) ATP synthase produces ATP from ADP in the presence of a proton or sodium gradient. F-type ATPases consist of two structural domains, F(1) containing the extramembraneous catalytic core and F(0) containing the membrane proton channel, linked together by a central stalk and a peripheral stalk. During catalysis, ATP synthesis in the catalytic domain of F(1) is coupled via a rotary mechanism of the central stalk subunits to proton translocation. In terms of biological role, this protein is part of the stalk that links CF(0) to CF(1). It either transmits conformational changes from CF(0) to CF(1) or is implicated in proton conduction. This is ATP synthase subunit delta from Bacillus subtilis (strain 168).